The chain runs to 79 residues: NAD(P)H-quinone oxidoreductase subunit L (79 aa).

The next 2 helical transmembrane spans lie at 10–30 and 48–68; these read IIIA…IPAV and GFMY…SPFL.

The protein belongs to the complex I NdhL subunit family. NDH-1 can be composed of about 15 different subunits; different subcomplexes with different compositions have been identified which probably have different functions.

It is found in the cellular thylakoid membrane. The catalysed reaction is a plastoquinone + NADH + (n+1) H(+)(in) = a plastoquinol + NAD(+) + n H(+)(out). It carries out the reaction a plastoquinone + NADPH + (n+1) H(+)(in) = a plastoquinol + NADP(+) + n H(+)(out). NDH-1 shuttles electrons from an unknown electron donor, via FMN and iron-sulfur (Fe-S) centers, to quinones in the respiratory and/or the photosynthetic chain. The immediate electron acceptor for the enzyme in this species is believed to be plastoquinone. Couples the redox reaction to proton translocation, and thus conserves the redox energy in a proton gradient. Cyanobacterial NDH-1 also plays a role in inorganic carbon-concentration. This chain is NAD(P)H-quinone oxidoreductase subunit L, found in Microcystis aeruginosa (strain NIES-843 / IAM M-2473).